The following is a 317-amino-acid chain: MAIRKLLLLLKPIDPYPFLQTEGASLIKNPQVLQYLESRCKVHKNAIKFCQEILSKKPVEWKPISRNDLSHPIRDVDMVITVGGDGTLLHASHFIDDSVPVLGVNSDPTQAHEVEELSDQFDASRSTGHLCAATVENFEQVLDDILFGRVVPAKVSRISLKLNSETLLSHALNDILIAQPCPAAVSRFSFKIKNKDGASSPKTVNCRSSGLRICTAAGSTAAMQSAGGFVMPMLSRDLQFMVREPISPGSTASLMHSTFKPDQFMDVNWYSDHGTIYIDGCQVQHSVQLGDTIEISSDAPVLNVFLSHGISQIRSRY.

Belongs to the NAD kinase family. In terms of assembly, homodimer. As to expression, ubiquitous.

The protein localises to the cytoplasm. It carries out the reaction NADH + ATP = ADP + NADPH + H(+). Two-fold decrease in activity in the presence of PPi, iodoacetate or para-chloromercuribenzoate. In terms of biological role, phosphorylates specifically NADH. Can phosphorylate NAD with a 100-fold decrease in efficiency compared to NADH. Prefers ATP as nucleoside triphosphate substrate. Can also utilize UTP, GTP and CTP. Key source of the cellular reductant NADPH which is an important antioxidant factor. The protein is NADH kinase (NADK3) of Arabidopsis thaliana (Mouse-ear cress).